Reading from the N-terminus, the 437-residue chain is Ribosomal protein uS12 methylthiotransferase RimO (437 aa).

The region spanning 4-114 (PRVSFVSLGC…VMSAVHEAVP (111 aa)) is the MTTase N-terminal domain. Residues Cys-13, Cys-49, Cys-78, Cys-145, Cys-149, and Cys-152 each contribute to the [4Fe-4S] cluster site. The Radical SAM core domain maps to 131–369 (LTPRHYAYLK…MAKQQQISTN (239 aa)). The 66-residue stretch at 372-437 (KKKVGKRLPV…DAYDLHGIAV (66 aa)) folds into the TRAM domain.

This sequence belongs to the methylthiotransferase family. RimO subfamily. Requires [4Fe-4S] cluster as cofactor.

The protein localises to the cytoplasm. The enzyme catalyses L-aspartate(89)-[ribosomal protein uS12]-hydrogen + (sulfur carrier)-SH + AH2 + 2 S-adenosyl-L-methionine = 3-methylsulfanyl-L-aspartate(89)-[ribosomal protein uS12]-hydrogen + (sulfur carrier)-H + 5'-deoxyadenosine + L-methionine + A + S-adenosyl-L-homocysteine + 2 H(+). Catalyzes the methylthiolation of an aspartic acid residue of ribosomal protein uS12. This Brucella anthropi (strain ATCC 49188 / DSM 6882 / CCUG 24695 / JCM 21032 / LMG 3331 / NBRC 15819 / NCTC 12168 / Alc 37) (Ochrobactrum anthropi) protein is Ribosomal protein uS12 methylthiotransferase RimO.